We begin with the raw amino-acid sequence, 134 residues long: Translation initiation factor 2 subunit beta (134 aa).

A compositionally biased stretch (basic and acidic residues) spans 1–12; it reads MGYEEQLDRALE. Residues 1–32 form a disordered region; that stretch reads MGYEEQLDRALEETPDIEGTAARFSVPDPDVR.

It belongs to the eIF-2-beta/eIF-5 family. In terms of assembly, heterotrimer composed of an alpha, a beta and a gamma chain.

Functionally, eIF-2 functions in the early steps of protein synthesis by forming a ternary complex with GTP and initiator tRNA. The sequence is that of Translation initiation factor 2 subunit beta from Natronomonas pharaonis (strain ATCC 35678 / DSM 2160 / CIP 103997 / JCM 8858 / NBRC 14720 / NCIMB 2260 / Gabara) (Halobacterium pharaonis).